The following is a 261-amino-acid chain: uncharacterized protein (261 aa).

Positions 1-22 (MIHSKKLTLGICLVLLIILIGG) are cleaved as a signal peptide. Residue Cys23 is the site of N-palmitoyl cysteine attachment. Cys23 carries the S-diacylglycerol cysteine lipid modification.

It belongs to the staphylococcal tandem lipoprotein family.

It localises to the cell membrane. This is an uncharacterized protein from Staphylococcus aureus (strain NCTC 8325 / PS 47).